We begin with the raw amino-acid sequence, 105 residues long: Guanidinium exporter (105 aa).

The helical transmembrane segment at 1–21 threads the bilayer; sequence MSWIILVIAGLLEVVWAVGLK. The Cytoplasmic portion of the chain corresponds to 22 to 28; the sequence is YTHGFSR. A helical transmembrane segment spans residues 29-49; that stretch reads LTPSVITVTAMIVSLALLAWA. Over 50–57 the chain is Periplasmic; the sequence is MKSLPVGT. Residues 58–78 traverse the membrane as a helical segment; sequence AYAVWTGIGAVGAAITGIVLL. Residues 79–81 are Cytoplasmic-facing; sequence GES. A helical transmembrane segment spans residues 82-102; that stretch reads ANPMRLASLALIVLGIIGLKL. Over 103 to 105 the chain is Periplasmic; that stretch reads STH.

Belongs to the drug/metabolite transporter (DMT) superfamily. Small multidrug resistance (SMR) (TC 2.A.7.1) family. Gdx/SugE subfamily.

Its subcellular location is the cell inner membrane. In terms of biological role, guanidinium ion exporter. Couples guanidinium export to the proton motive force, exchanging one guanidinium ion for two protons. The protein is Guanidinium exporter of Escherichia coli O6:H1 (strain CFT073 / ATCC 700928 / UPEC).